The following is a 245-amino-acid chain: Carboxy-S-adenosyl-L-methionine synthase (245 aa).

S-adenosyl-L-methionine is bound by residues Tyr42, 67 to 69, 92 to 93, 120 to 121, Asn135, and Arg202; these read GCS, DN, and DI.

This sequence belongs to the class I-like SAM-binding methyltransferase superfamily. Cx-SAM synthase family. In terms of assembly, homodimer.

The enzyme catalyses prephenate + S-adenosyl-L-methionine = carboxy-S-adenosyl-L-methionine + 3-phenylpyruvate + H2O. Catalyzes the conversion of S-adenosyl-L-methionine (SAM) to carboxy-S-adenosyl-L-methionine (Cx-SAM). The protein is Carboxy-S-adenosyl-L-methionine synthase of Vibrio vulnificus (strain CMCP6).